Consider the following 725-residue polypeptide: Ribonucleoside-diphosphate reductase subunit alpha (725 aa).

Residues threonine 172, 188–189 (SC), glycine 217, 397–401 (NLCSE), and 599–603 (PTGSI) each bind substrate. A disulfide bridge connects residues cysteine 189 and cysteine 426. Asparagine 397 acts as the Proton acceptor in catalysis. Residue cysteine 399 is the Cysteine radical intermediate of the active site. Catalysis depends on glutamate 401, which acts as the Proton acceptor.

This sequence belongs to the ribonucleoside diphosphate reductase large chain family. Tetramer of two alpha and two beta subunits. Co-immunoprecipitates with DarG in the presence and absence of darT.

The enzyme catalyses a 2'-deoxyribonucleoside 5'-diphosphate + [thioredoxin]-disulfide + H2O = a ribonucleoside 5'-diphosphate + [thioredoxin]-dithiol. With respect to regulation, under complex allosteric control mediated by deoxynucleoside triphosphates and ATP binding. The type of nucleotide bound at the specificity site determines substrate preference. It seems probable that ATP makes the enzyme reduce CDP and UDP, dGTP favors ADP reduction and dTTP favors GDP reduction. CDP reduction is stimulated by dATP. Functionally, provides the precursors necessary for DNA synthesis. Catalyzes the biosynthesis of deoxyribonucleotides from the corresponding ribonucleotides. When coexpressed in E.coli with nrdF2 the 2 proteins complement a temperature-sensitive E.coli mutant, however coexpression with nrdF1 does not complement. This is Ribonucleoside-diphosphate reductase subunit alpha (nrdE) from Mycobacterium tuberculosis (strain ATCC 25618 / H37Rv).